The chain runs to 436 residues: Enolase (436 aa).

Positions 159 and 168 each coordinate substrate. Catalysis depends on Glu211, which acts as the Proton donor. Residues Asp246, Glu295, and Asp322 each contribute to the Mg(2+) site. Substrate contacts are provided by Glu295 and Asp322. Lys347 acts as the Proton acceptor in catalysis. Substrate-binding positions include 374 to 377 and Lys398; that span reads SHRS.

It belongs to the enolase family. Homodimer. The cofactor is Mg(2+).

It localises to the cytoplasm. It carries out the reaction (2R)-2-phosphoglycerate = phosphoenolpyruvate + H2O. Its pathway is carbohydrate degradation; glycolysis; pyruvate from D-glyceraldehyde 3-phosphate: step 4/5. The chain is Enolase from Neocallimastix frontalis (Rumen fungus).